A 700-amino-acid polypeptide reads, in one-letter code: Polyribonucleotide nucleotidyltransferase (700 aa).

The Mg(2+) site is built by Asp-485 and Asp-491. The region spanning 552–611 (PRITTLKINPEKIRDVIGKGGATIRALTEETGTTIELEDDGTVKIASANGDATKEAIRRI) is the KH domain. The 69-residue stretch at 621 to 689 (GTVYNGKVVR…RQGRVRLSMK (69 aa)) folds into the S1 motif domain.

This sequence belongs to the polyribonucleotide nucleotidyltransferase family. Component of the RNA degradosome, which is a multiprotein complex involved in RNA processing and mRNA degradation. Mg(2+) is required as a cofactor.

The protein resides in the cytoplasm. The enzyme catalyses RNA(n+1) + phosphate = RNA(n) + a ribonucleoside 5'-diphosphate. Functionally, involved in mRNA degradation. Catalyzes the phosphorolysis of single-stranded polyribonucleotides processively in the 3'- to 5'-direction. The sequence is that of Polyribonucleotide nucleotidyltransferase from Shewanella loihica (strain ATCC BAA-1088 / PV-4).